A 335-amino-acid chain; its full sequence is Glycerol-3-phosphate dehydrogenase [NAD(P)+] (335 aa).

Residues serine 12, tryptophan 13, and lysine 107 each contribute to the NADPH site. Lysine 107, glycine 138, and serine 140 together coordinate sn-glycerol 3-phosphate. Position 142 (alanine 142) interacts with NADPH. Sn-glycerol 3-phosphate-binding residues include lysine 193, aspartate 246, serine 256, arginine 257, and asparagine 258. The Proton acceptor role is filled by lysine 193. Arginine 257 is an NADPH binding site. Valine 281 and glutamate 283 together coordinate NADPH.

Belongs to the NAD-dependent glycerol-3-phosphate dehydrogenase family.

The protein resides in the cytoplasm. It carries out the reaction sn-glycerol 3-phosphate + NAD(+) = dihydroxyacetone phosphate + NADH + H(+). The catalysed reaction is sn-glycerol 3-phosphate + NADP(+) = dihydroxyacetone phosphate + NADPH + H(+). Its pathway is membrane lipid metabolism; glycerophospholipid metabolism. Its function is as follows. Catalyzes the reduction of the glycolytic intermediate dihydroxyacetone phosphate (DHAP) to sn-glycerol 3-phosphate (G3P), the key precursor for phospholipid synthesis. This Geobacter sulfurreducens (strain ATCC 51573 / DSM 12127 / PCA) protein is Glycerol-3-phosphate dehydrogenase [NAD(P)+].